A 415-amino-acid polypeptide reads, in one-letter code: uncharacterized protein (415 aa).

The [4Fe-4S] cluster site is built by Cys-85, Cys-91, Cys-94, and Cys-175. The S-adenosyl-L-methionine site is built by Gln-248, Tyr-276, Glu-297, and Asn-344. Cys-371 functions as the Nucleophile in the catalytic mechanism.

It belongs to the class I-like SAM-binding methyltransferase superfamily. RNA M5U methyltransferase family.

This is an uncharacterized protein from Leptospira interrogans serogroup Icterohaemorrhagiae serovar copenhageni (strain Fiocruz L1-130).